The primary structure comprises 235 residues: Probable transcriptional regulatory protein Ccon26_04940 (235 aa).

Belongs to the TACO1 family.

It is found in the cytoplasm. The polypeptide is Probable transcriptional regulatory protein Ccon26_04940 (Campylobacter concisus (strain 13826)).